The primary structure comprises 435 residues: Putative GMP synthase [glutamine-hydrolyzing] 2 (435 aa).

The region spanning 1–120 (MKQDMIVILD…VFDTCQAEAN (120 aa)) is the Glutamine amidotransferase type-1; truncated domain. The GMPS ATP-PPase domain occupies 121 to 310 (WNMANFVNDQ…LGLPYEMVYR (190 aa)). 148-154 (SGGVDSS) is an ATP binding site.

As to quaternary structure, homodimer.

The catalysed reaction is XMP + L-glutamine + ATP + H2O = GMP + L-glutamate + AMP + diphosphate + 2 H(+). The protein operates within purine metabolism; GMP biosynthesis; GMP from XMP (L-Gln route): step 1/1. Catalyzes the synthesis of GMP from XMP. This chain is Putative GMP synthase [glutamine-hydrolyzing] 2 (guaA2), found in Bacteroides thetaiotaomicron (strain ATCC 29148 / DSM 2079 / JCM 5827 / CCUG 10774 / NCTC 10582 / VPI-5482 / E50).